Here is an 805-residue protein sequence, read N- to C-terminus: Ubiquitin carboxyl-terminal hydrolase 10 (805 aa).

Residues 139-170 (DGSGNADSDGTSGTGQRERKKKKKRPPGYYSY) are disordered. Over residues 143-153 (NADSDGTSGTG) the composition is skewed to polar residues. The region spanning 422 to 802 (RGLINKGNWC…TAYLLYYRRV (381 aa)) is the USP domain. C431 functions as the Nucleophile in the catalytic mechanism. A disordered region spans residues 561-593 (HINNGPDPVSEKEEINKDEQEGSDEEWEQVGPR). The segment covering 569-580 (VSEKEEINKDEQ) has biased composition (basic and acidic residues). Catalysis depends on H756, which acts as the Proton acceptor.

This sequence belongs to the peptidase C19 family. USP10 subfamily.

Its subcellular location is the cytoplasm. It is found in the nucleus. The catalysed reaction is Thiol-dependent hydrolysis of ester, thioester, amide, peptide and isopeptide bonds formed by the C-terminal Gly of ubiquitin (a 76-residue protein attached to proteins as an intracellular targeting signal).. Functionally, hydrolase that can remove conjugated ubiquitin from target proteins such as p53/tp53, rps2/us5, rps3/us3, rps10/eS10, becn1, snx3 and cftr. Acts as an essential regulator of p53/tp53 stability: in unstressed cells, specifically deubiquitinates p53/tp53 in the cytoplasm, leading to counteracts MDM2 action and stabilize p53/tp53. Following DNA damage, translocates to the nucleus and deubiquitinates p53/tp53, leading to regulate the p53/TP53-dependent DNA damage response. Component of a regulatory loop that controls autophagy and p53/tp53 levels. Plays a key role in 40S ribosome subunit recycling when a ribosome has stalled during translation: acts both by inhibiting formation of stress granules, which store stalled translation pre-initiation complexes, and mediating deubiquitination of 40S ribosome subunits. Deubiquitinates cftr in early endosomes, enhancing its endocytic recycling. The sequence is that of Ubiquitin carboxyl-terminal hydrolase 10 (usp10) from Xenopus tropicalis (Western clawed frog).